The sequence spans 791 residues: Subtilisin-like protease SBT5.6 (791 aa).

The first 20 residues, 1–20, serve as a signal peptide directing secretion; that stretch reads MKKLTSLFPLLFLIPLLASC. The propeptide at 21–108 is activation peptide; sequence AEEKQVYIVY…KSHPRKYEAH (88 aa). The Inhibitor I9 domain maps to 26 to 104; that stretch reads VYIVYFGEHK…VSVFKSHPRK (79 aa). Positions 134–645 constitute a Peptidase S8 domain; that stretch reads ADDRFRVGRN…SGHFRPTKAA (512 aa). Asp160 acts as the Charge relay system in catalysis. Residues Asn193 and Asn219 are each glycosylated (N-linked (GlcNAc...) asparagine). His235 functions as the Charge relay system in the catalytic mechanism. The 95-residue stretch at 400 to 494 folds into the PA domain; the sequence is FAPLVYASNV…VTPTVVDKIL (95 aa). Asn417 carries an N-linked (GlcNAc...) asparagine glycan. Ser578 functions as the Charge relay system in the catalytic mechanism. N-linked (GlcNAc...) asparagine glycans are attached at residues Asn666, Asn713, and Asn761.

This sequence belongs to the peptidase S8 family.

Its subcellular location is the secreted. The sequence is that of Subtilisin-like protease SBT5.6 from Arabidopsis thaliana (Mouse-ear cress).